The primary structure comprises 221 residues: Large ribosomal subunit protein uL3 (221 aa).

The segment at 140–160 (GGPKTHGSGFHRHAGSIGMRS) is disordered.

This sequence belongs to the universal ribosomal protein uL3 family. In terms of assembly, part of the 50S ribosomal subunit. Forms a cluster with proteins L14 and L19.

One of the primary rRNA binding proteins, it binds directly near the 3'-end of the 23S rRNA, where it nucleates assembly of the 50S subunit. The sequence is that of Large ribosomal subunit protein uL3 from Chlamydia caviae (strain ATCC VR-813 / DSM 19441 / 03DC25 / GPIC) (Chlamydophila caviae).